An 829-amino-acid chain; its full sequence is DNA topoisomerase 1 (829 aa).

The segment at 1–248 (MSEDHVQNDS…AKGNEEGVKK (248 aa)) is disordered. A compositionally biased stretch (basic residues) spans 22 to 36 (HKHKKDKEHRHKEHK). Composition is skewed to basic and acidic residues over residues 37 to 58 (KDKD…SEKK), 68 to 159 (KHRE…EKMK), and 193 to 220 (KENK…DDKK). Interaction with DNA stretches follow at residues 481–482 (KY), 544–549 (RAGNEK), and 641–643 (TAK). Residues 488 to 821 (SSRIKGEKDW…SIWQTTTSNF (334 aa)) enclose the Topo IB-type catalytic domain. Tyr-779 acts as the O-(3'-phospho-DNA)-tyrosine intermediate in catalysis.

Belongs to the type IB topoisomerase family. In terms of assembly, monomer.

Its subcellular location is the nucleus. It catalyses the reaction ATP-independent breakage of single-stranded DNA, followed by passage and rejoining.. In terms of biological role, releases the supercoiling and torsional tension of DNA introduced during the DNA replication and transcription by transiently cleaving and rejoining one strand of the DNA duplex. Introduces a single-strand break via transesterification at a target site in duplex DNA. The scissile phosphodiester is attacked by the catalytic tyrosine of the enzyme, resulting in the formation of a DNA-(3'-phosphotyrosyl)-enzyme intermediate and the expulsion of a 5'-OH DNA strand. TThe free DNA strand then rotates around the intact phosphodiester bond on the opposing strand, thus removing DNA supercoils. Finally, in the religation step, the DNA 5'-OH attacks the covalent intermediate to expel the active-site tyrosine and restore the DNA phosphodiester backbone. May play a role in the circadian transcription of the core circadian clock component BMAL1. In Xenopus laevis (African clawed frog), this protein is DNA topoisomerase 1 (top1).